Here is a 240-residue protein sequence, read N- to C-terminus: Phosducin-like protein 3 (240 aa).

N-acetylmethionine is present on Met-1. A Phosducin domain is found at 27-181 (KELEEEEAEK…EGDIKAQFIG (155 aa)). 4 positions are modified to phosphoserine: Ser-44, Ser-65, Ser-235, and Ser-237. A thioredoxin fold region spans residues 92-240 (FGEVLEISGK…MRRDSDSEDD (149 aa)).

The protein belongs to the phosducin family. In terms of assembly, interacts (via thioredoxin fold region) with KDR/VEGFR2 (via juxtamembrane domain). Forms ternary complexes with the chaperonin CCT complex and actin substrate, leading to inhibition of actin folding. Interacts with XIAP (via BIR 3 and RING domain). Interacts with HSP90AA1 and HSP90AB1. In terms of processing, N-terminal methionine acetylation destabilizes the protein. As to expression, expressed in blood vessels (at protein level).

It localises to the cytoplasm. The protein localises to the perinuclear region. It is found in the endoplasmic reticulum. In terms of biological role, acts as a chaperone for the angiogenic VEGF receptor KDR/VEGFR2, increasing its abundance by inhibiting its ubiquitination and degradation. Inhibits the folding activity of the chaperonin-containing T-complex (CCT) which leads to inhibition of cytoskeletal actin folding. Acts as a chaperone during heat shock alongside HSP90 and HSP40/70 chaperone complexes. Modulates the activation of caspases during apoptosis. The polypeptide is Phosducin-like protein 3 (Pdcl3) (Mus musculus (Mouse)).